Consider the following 121-residue polypeptide: Putative iron-sulfur cluster insertion protein ErpA (121 aa).

The iron-sulfur cluster site is built by cysteine 49, cysteine 113, and cysteine 115.

This sequence belongs to the HesB/IscA family. Homodimer. Iron-sulfur cluster serves as cofactor.

In terms of biological role, required for insertion of 4Fe-4S clusters. The protein is Putative iron-sulfur cluster insertion protein ErpA of Verminephrobacter eiseniae (strain EF01-2).